A 182-amino-acid polypeptide reads, in one-letter code: Putative manganese efflux pump MntP (182 aa).

A run of 6 helical transmembrane segments spans residues 6–26 (LIPLIIMAFALGMDAFSVSLG), 37–57 (ILYIGVTIGIFHIIMPFIGMV), 71–91 (HFAGAILLIGLGFYIVYSSIL), 101–121 (IGISLFVFAFGVSIDSFSVGL), 131–151 (IITILLFGFVSMLLAWTGLFI), and 162–182 (YGEIVGGIILVGFGLYLLFPI).

Belongs to the MntP (TC 9.B.29) family.

Its subcellular location is the cell membrane. Probably functions as a manganese efflux pump. The polypeptide is Putative manganese efflux pump MntP (Bacillus thuringiensis subsp. konkukian (strain 97-27)).